A 341-amino-acid polypeptide reads, in one-letter code: Outer membrane protein assembly factor BamD (341 aa).

The first 17 residues, 1–17 (MQVKHLLLIAILALTAA), serve as a signal peptide directing secretion. Residue cysteine 18 is the site of N-palmitoyl cysteine attachment. Cysteine 18 carries the S-diacylglycerol cysteine lipid modification. Over residues 289–316 (DVIKQYEDAEREIPAELKPENQDHSADD) the composition is skewed to basic and acidic residues. A disordered region spans residues 289-330 (DVIKQYEDAEREIPAELKPENQDHSADDEKPESDDDEDSGRS). Residues 317-326 (EKPESDDDED) are compositionally biased toward acidic residues.

This sequence belongs to the BamD family. As to quaternary structure, part of the Bam complex.

It localises to the cell outer membrane. Its function is as follows. Part of the outer membrane protein assembly complex, which is involved in assembly and insertion of beta-barrel proteins into the outer membrane. This chain is Outer membrane protein assembly factor BamD, found in Pseudomonas aeruginosa (strain ATCC 15692 / DSM 22644 / CIP 104116 / JCM 14847 / LMG 12228 / 1C / PRS 101 / PAO1).